A 50-amino-acid chain; its full sequence is uncharacterized protein (50 aa).

The helical transmembrane segment at 5-19 (IIIIVIVIIIFFFYL) threads the bilayer. The stretch at 19–50 (LKQKKLTNCETQVVKVQKDIDEINLKLKKLNK) forms a coiled coil.

The protein resides in the membrane. This is an uncharacterized protein from Acheta domesticus (House cricket).